Consider the following 635-residue polypeptide: Thrombopoietin receptor (635 aa).

A signal peptide spans 1–25 (MPSWALFMVTSCLLLAPQNLAQVSS). Residues 26 to 491 (QDVSLLASDS…RVETATETAW (466 aa)) lie on the Extracellular side of the membrane. 2 cysteine pairs are disulfide-bonded: C40–C50 and C77–C93. N-linked (GlcNAc...) asparagine glycans are attached at residues N117 and N178. In terms of domain architecture, Fibronectin type-III 1 spans 172–281 (GPRDPKNSTG…WSLPVTVDLP (110 aa)). 4 disulfide bridges follow: C193–C323, C194–C241, C291–C301, and C334–C352. Residues 205–232 (ALDQSPCAQPTMPWQDGPKQTSPSREAS) form a disordered region. An N-linked (GlcNAc...) asparagine glycan is attached at N298. N358 is a glycosylation site (N-linked (GlcNAc...) asparagine). The Fibronectin type-III 2 domain occupies 392 to 486 (PTPNLHWREI…WSDPTRVETA (95 aa)). The WSXWS motif signature appears at 474–478 (WSSWS). The helical transmembrane segment at 492-513 (ISLVTALHLVLGLSAVLGLLLL) threads the bilayer. Over 514 to 635 (RWQFPAHYRR…YLPLSYWQQP (122 aa)) the chain is Cytoplasmic. A Box 1 motif motif is present at residues 528–536 (LWPSLPDLH). Glycyl lysine isopeptide (Lys-Gly) (interchain with G-Cter in ubiquitin) cross-links involve residues K553 and K573. Phosphotyrosine occurs at positions 591, 626, and 631.

The protein belongs to the type I cytokine receptor family. Type 1 subfamily. In terms of assembly, homodimer. Interacts with ATXN2L. Interacts with JAK2 and TYK2; these interactions increase MPL localization to the cell membrane. Interacts with THPO. Interacts with SHIP/INPP5D. Interacts with BTK. Interacts with SYK; this interaction negatively regulates THPO-mediated ERK1/2 signaling. Phosphorylated at Tyr-591 in response to THPO stimulation. In terms of processing, ubiquitination at Lys-553 and Lys-573 targets MPL for degradation by both the lysosomal and proteasomal pathways. The E3 ubiquitin-protein ligase CBL significantly contributes to this ubiquitination. In terms of tissue distribution, expressed at a low level in a large number of cells of hematopoietic origin. Isoform 1 and isoform 2 are always found to be coexpressed.

It is found in the cell membrane. Its subcellular location is the golgi apparatus. The protein localises to the cell surface. Receptor for thrombopoietin that regulates hematopoietic stem cell renewal, megakaryocyte differentiation, and platelet formation. Upon activation by THPO, induces rapid tyrosine phosphorylation and activation of JAK2, providing docking sites for many signaling proteins such as STAT5, SHIP/INPP5D, GRB2, SOS1 and PI3K. In turn, These signaling cascades lead to the proliferation, survival, and differentiation of megakaryocytes, ultimately leading to increased platelet production. The protein is Thrombopoietin receptor (MPL) of Homo sapiens (Human).